The chain runs to 103 residues: Sec-independent protein translocase protein TatA (103 aa).

A helical transmembrane segment spans residues 1 to 21 (MGNIFSPTHLIIILLLILLLF). The tract at residues 48-103 (EESIEDKVEMADTSQVINEESQQSQPLSVKRAAIRRKASSDSKGGKASIAKKQRVK) is disordered. The segment covering 59-74 (DTSQVINEESQQSQPL) has biased composition (polar residues).

Belongs to the TatA/E family. The Tat system comprises two distinct complexes: a TatABC complex, containing multiple copies of TatA, TatB and TatC subunits, and a separate TatA complex, containing only TatA subunits. Substrates initially bind to the TatABC complex, which probably triggers association of the separate TatA complex to form the active translocon.

The protein localises to the cell inner membrane. Its function is as follows. Part of the twin-arginine translocation (Tat) system that transports large folded proteins containing a characteristic twin-arginine motif in their signal peptide across membranes. TatA could form the protein-conducting channel of the Tat system. The protein is Sec-independent protein translocase protein TatA of Bartonella tribocorum (strain CIP 105476 / IBS 506).